The following is a 467-amino-acid chain: Coiled-coil domain-containing protein 71 (467 aa).

A disordered region spans residues 81–105; the sequence is PSQTKLQARAPNPTATSPPASAPRT. Residues 88 to 105 show a composition bias toward low complexity; the sequence is ARAPNPTATSPPASAPRT. S129 bears the Phosphoserine mark. Disordered regions lie at residues 211-280 and 349-416; these read KLRK…GTKT and VRAK…KAWL. Over residues 253-265 the composition is skewed to polar residues; that stretch reads GHQSKTNRATGSP. A coiled-coil region spans residues 279–359; sequence KTAQAKVART…RAKAKVARTQ (81 aa). Positions 349-380 are enriched in basic residues; the sequence is VRAKAKVARTQPRGRGRPKGSAKARTTRKGQK. The segment covering 392 to 401 has biased composition (basic and acidic residues); the sequence is RAEEAKDLPP.

In Homo sapiens (Human), this protein is Coiled-coil domain-containing protein 71 (CCDC71).